Here is a 186-residue protein sequence, read N- to C-terminus: UPF0301 protein Neut_0448 (186 aa).

This sequence belongs to the UPF0301 (AlgH) family.

This is UPF0301 protein Neut_0448 from Nitrosomonas eutropha (strain DSM 101675 / C91 / Nm57).